Reading from the N-terminus, the 158-residue chain is Transcription elongation factor GreA (158 aa).

The protein belongs to the GreA/GreB family.

In terms of biological role, necessary for efficient RNA polymerase transcription elongation past template-encoded arresting sites. The arresting sites in DNA have the property of trapping a certain fraction of elongating RNA polymerases that pass through, resulting in locked ternary complexes. Cleavage of the nascent transcript by cleavage factors such as GreA or GreB allows the resumption of elongation from the new 3'terminus. GreA releases sequences of 2 to 3 nucleotides. The polypeptide is Transcription elongation factor GreA (Agrobacterium fabrum (strain C58 / ATCC 33970) (Agrobacterium tumefaciens (strain C58))).